Here is a 297-residue protein sequence, read N- to C-terminus: rRNA 2'-O-methyltransferase fibrillarin (297 aa).

The interval 1–56 (MRGGFGRGGGGRGGSRGGRGGFGRGGGRGGGRGGGRGGGRGGGRGGGRGGGRGGAG) is disordered. An asymmetric dimethylarginine mark is found at R2, R7, R12, R16, R19, R24, R28, R32, R36, R40, R44, R48, and R52. Residues 149–150 (TT), 168–169 (EF), 192–193 (DA), and 212–215 (DVAQ) each bind S-adenosyl-L-methionine.

It belongs to the methyltransferase superfamily. Fibrillarin family. In terms of assembly, component of box C/D small nucleolar ribonucleoprotein (snoRNP) particles. It is associated with the U3, U8 and U13 small nuclear RNAs. By homology to other fibrillarins, some or all of the N-terminal domain arginines are modified to asymmetric dimethylarginine (DMA).

It is found in the nucleus. The protein localises to the nucleolus. It carries out the reaction L-glutaminyl-[histone H2A] + S-adenosyl-L-methionine = N(5)-methyl-L-glutaminyl-[histone H2A] + S-adenosyl-L-homocysteine + H(+). Functionally, S-adenosyl-L-methionine-dependent methyltransferase that has the ability to methylate both RNAs and proteins. Involved in pre-rRNA processing. Utilizes the methyl donor S-adenosyl-L-methionine to catalyze the site-specific 2'-hydroxyl methylation of ribose moieties in pre-ribosomal RNA. Site specificity is provided by a guide RNA that base pairs with the substrate. Methylation occurs at a characteristic distance from the sequence involved in base pairing with the guide RNA. Also acts as a protein methyltransferase by mediating methylation of 'Gln-105' of histone H2A (H2AQ105me), a modification that impairs binding of the FACT complex and is specifically present at 35S ribosomal DNA locus. This Leishmania major protein is rRNA 2'-O-methyltransferase fibrillarin.